We begin with the raw amino-acid sequence, 83 residues long: Three-finger toxin MALT0058C (83 aa).

An N-terminal signal peptide occupies residues Met-1–Thr-21. Cystine bridges form between Cys-24–Cys-45, Cys-38–Cys-62, Cys-64–Cys-75, and Cys-76–Cys-81.

The protein belongs to the three-finger toxin family. Short-chain subfamily. Type I alpha-neurotoxin sub-subfamily. As to expression, expressed by the venom gland.

It is found in the secreted. Its function is as follows. Binds to muscle nicotinic acetylcholine receptor (nAChR) and inhibits acetylcholine from binding to the receptor, thereby impairing neuromuscular transmission. This chain is Three-finger toxin MALT0058C, found in Micrurus altirostris (Uruguayan coral snake).